Here is a 432-residue protein sequence, read N- to C-terminus: Phytase AppA (432 aa).

The signal sequence occupies residues 1–22 (MKAILIPFLSLLIPLTPQSAFA). Residue Arg38 participates in 1D-myo-inositol hexakisphosphate binding. Residue His39 is the Nucleophile of the active site. Residues 42-46 (RAPTK) and Arg114 each bind 1D-myo-inositol hexakisphosphate. 4 disulfides stabilise this stretch: Cys99/Cys130, Cys155/Cys430, Cys200/Cys210, and Cys404/Cys413. Residues Arg289 and 325-327 (HDT) contribute to the 1D-myo-inositol hexakisphosphate site. Asp326 acts as the Proton donor in catalysis.

It belongs to the histidine acid phosphatase family. As to quaternary structure, monomer.

It localises to the periplasm. The catalysed reaction is 1D-myo-inositol hexakisphosphate + H2O = 1D-myo-inositol 1,2,3,4,5-pentakisphosphate + phosphate. It catalyses the reaction 1D-myo-inositol 1,2,3,4,5-pentakisphosphate + H2O = 1D-myo-inositol 2,3,4,5-tetrakisphosphate + phosphate. It carries out the reaction 1D-myo-inositol 2,3,4,5-tetrakisphosphate + H2O = 1D-myo-inositol 2,4,5-triphosphate + phosphate. The enzyme catalyses 1D-myo-inositol 2,4,5-triphosphate + H2O = 1D-myo-inositol 2,5-bisphosphate + phosphate. The catalysed reaction is 1D-myo-inositol 2,5-bisphosphate + H2O = 1D-myo-inositol 2-phosphate + phosphate. It catalyses the reaction GTP + H2O = GDP + phosphate + H(+). With respect to regulation, contains three consecutive and one non-consecutive disulfide bonds and shows a strong dependence on DsbC for its full activity. Competitively inhibited by tartaric acid and by sodium fluorid. In terms of biological role, catalyzes the hydrolysis of phytate (or myo-inositol hexakisphosphate, an indigestible organic form of phosphorus that is found in many plant tissues) to myo-inositol and inorganic phosphate. Dephosphorylates phytate in a stereospecific way by sequential removal of phosphate groups to produce myo-inositol 2-monophosphate. Also shows phosphoanhydride phosphatase activity and hydrolyzes the distal phosphoryl residues of GTP, the 5'-beta-phosphoryl residue of the regulatory nucleotide ppGpp and tripolyphosphates. Does not split most phosphomonoesters with the exception of the synthetic substrate p-nitrophenyl phosphate (pNPP), 2,3-bisphosphoglycerate and fructose 1,6-bisphosphate. In Escherichia coli (strain K12), this protein is Phytase AppA.